The primary structure comprises 130 residues: Small ribosomal subunit protein uS9 (130 aa).

The protein belongs to the universal ribosomal protein uS9 family.

The sequence is that of Small ribosomal subunit protein uS9 from Bacillus velezensis (strain DSM 23117 / BGSC 10A6 / LMG 26770 / FZB42) (Bacillus amyloliquefaciens subsp. plantarum).